We begin with the raw amino-acid sequence, 364 residues long: 3-isopropylmalate dehydrogenase (364 aa).

79-92 (GSKWDHLPEIEKPE) lines the NAD(+) pocket. 4 residues coordinate substrate: R100, R110, R139, and D227. Mg(2+) contacts are provided by D227, D251, and D255. 285 to 297 (GSAPNIAGKTIAN) lines the NAD(+) pocket.

The protein belongs to the isocitrate and isopropylmalate dehydrogenases family. LeuB type 1 subfamily. As to quaternary structure, homodimer. Mg(2+) is required as a cofactor. Requires Mn(2+) as cofactor.

Its subcellular location is the cytoplasm. It catalyses the reaction (2R,3S)-3-isopropylmalate + NAD(+) = 4-methyl-2-oxopentanoate + CO2 + NADH. It functions in the pathway amino-acid biosynthesis; L-leucine biosynthesis; L-leucine from 3-methyl-2-oxobutanoate: step 3/4. Catalyzes the oxidation of 3-carboxy-2-hydroxy-4-methylpentanoate (3-isopropylmalate) to 3-carboxy-4-methyl-2-oxopentanoate. The product decarboxylates to 4-methyl-2 oxopentanoate. The chain is 3-isopropylmalate dehydrogenase from Buchnera aphidicola subsp. Thelaxes suberi.